The sequence spans 126 residues: Glycine cleavage system H protein (126 aa).

The region spanning 22-103 (KAYIGITDYA…PYGSWMALVE (82 aa)) is the Lipoyl-binding domain. Residue K63 is modified to N6-lipoyllysine.

The protein belongs to the GcvH family. As to quaternary structure, the glycine cleavage system is composed of four proteins: P, T, L and H. (R)-lipoate is required as a cofactor.

In terms of biological role, the glycine cleavage system catalyzes the degradation of glycine. The H protein shuttles the methylamine group of glycine from the P protein to the T protein. This is Glycine cleavage system H protein from Thermoanaerobacter sp. (strain X514).